The following is a 71-amino-acid chain: Gas vesicle protein A (71 aa).

The tract at residues 12–22 (LAEVIDRILDK) is alpha helix 1. Positions 26–34 (IDAWARVSL) are beta-strand 1. The interval 35-37 (VGI) is beta turn. The segment at 38-46 (ELLAIEARV) is beta-strand 2. Positions 51–70 (VETYLKYAEAVGLTQXAXXA) are alpha helix 2.

Belongs to the gas vesicle GvpA family. In terms of assembly, the gas vesicle shell is 2 nm thick and consists of a single layer of this protein. It forms helical ribs nearly perpendicular to the long axis of the vesicle.

It localises to the gas vesicle shell. Functionally, gas vesicles are hollow, gas filled proteinaceous nanostructures found in some microorganisms. During planktonic growth they allow positioning of the organism at a favorable depth for light or nutrient acquisition. GvpA forms the protein shell. This chain is Gas vesicle protein A, found in Microcystis sp. (strain BC 84/1).